The sequence spans 53 residues: uncharacterized protein (53 aa).

This is an uncharacterized protein from Thermoproteus tenax (TTV1).